The primary structure comprises 348 residues: D-erythrose-4-phosphate dehydrogenase (348 aa).

Residues Arg-12–Ile-13 and Arg-81 each bind NAD(+). Residues Ser-154–Thr-156, Arg-200, Thr-213–Lys-214, and Arg-236 contribute to the substrate site. Catalysis depends on Cys-155, which acts as the Nucleophile. Asn-318 provides a ligand contact to NAD(+).

This sequence belongs to the glyceraldehyde-3-phosphate dehydrogenase family. Epd subfamily. Homotetramer.

It localises to the cytoplasm. The catalysed reaction is D-erythrose 4-phosphate + NAD(+) + H2O = 4-phospho-D-erythronate + NADH + 2 H(+). It participates in cofactor biosynthesis; pyridoxine 5'-phosphate biosynthesis; pyridoxine 5'-phosphate from D-erythrose 4-phosphate: step 1/5. Catalyzes the NAD-dependent conversion of D-erythrose 4-phosphate to 4-phosphoerythronate. This is D-erythrose-4-phosphate dehydrogenase from Salmonella dublin (strain CT_02021853).